The primary structure comprises 371 residues: Queuine tRNA-ribosyltransferase (371 aa).

Asp-89 (proton acceptor) is an active-site residue. Substrate-binding positions include 89 to 93 (DSGGF), Asp-143, Gln-185, and Gly-212. Residues 243 to 249 (GVGTPED) are RNA binding. The Nucleophile role is filled by Asp-262. The tract at residues 267–271 (TRNAR) is RNA binding; important for wobble base 34 recognition. Residues Cys-300, Cys-302, Cys-305, and His-331 each coordinate Zn(2+).

The protein belongs to the queuine tRNA-ribosyltransferase family. As to quaternary structure, homodimer. Within each dimer, one monomer is responsible for RNA recognition and catalysis, while the other monomer binds to the replacement base PreQ1. Zn(2+) serves as cofactor.

It catalyses the reaction 7-aminomethyl-7-carbaguanine + guanosine(34) in tRNA = 7-aminomethyl-7-carbaguanosine(34) in tRNA + guanine. It participates in tRNA modification; tRNA-queuosine biosynthesis. Catalyzes the base-exchange of a guanine (G) residue with the queuine precursor 7-aminomethyl-7-deazaguanine (PreQ1) at position 34 (anticodon wobble position) in tRNAs with GU(N) anticodons (tRNA-Asp, -Asn, -His and -Tyr). Catalysis occurs through a double-displacement mechanism. The nucleophile active site attacks the C1' of nucleotide 34 to detach the guanine base from the RNA, forming a covalent enzyme-RNA intermediate. The proton acceptor active site deprotonates the incoming PreQ1, allowing a nucleophilic attack on the C1' of the ribose to form the product. After dissociation, two additional enzymatic reactions on the tRNA convert PreQ1 to queuine (Q), resulting in the hypermodified nucleoside queuosine (7-(((4,5-cis-dihydroxy-2-cyclopenten-1-yl)amino)methyl)-7-deazaguanosine). The polypeptide is Queuine tRNA-ribosyltransferase (Nitrosomonas europaea (strain ATCC 19718 / CIP 103999 / KCTC 2705 / NBRC 14298)).